Consider the following 388-residue polypeptide: 3-oxo-Delta(4,5)-steroid 5-beta-reductase (388 aa).

At serine 2 the chain carries N-acetylserine. NADP(+) contacts are provided by residues 35-37 (TGI), 63-64 (RR), 81-82 (DV), threonine 105, and glutamine 143. Catalysis depends on residues lysine 147 and tyrosine 178. NADP(+) is bound by residues tyrosine 178, isoleucine 205, and 212–214 (SLM).

It belongs to the short-chain dehydrogenases/reductases (SDR) family. Highly divergent. As to quaternary structure, homodimer. In terms of tissue distribution, expressed in roots, stems, leaves, flowers, seeds and siliques. Expressed in the vascular bundles.

It carries out the reaction 5beta-cholestan-3-one + NADP(+) = cholest-4-en-3-one + NADPH + H(+). It catalyses the reaction 4,5beta-dihydrocortisone + NADP(+) = cortisone + NADPH + H(+). Its function is as follows. Involved in vascular strand development. Catalyzes the stereospecific conversion of progesterone to 5-beta-pregnane-3,20-dione. Can use progesterone, testosterone, 21-acetyl cortexone, 2-cyclohexenone, but-1-en-3-one, ethyl acrylate, ethylmethacrylate, cortisone and canarigenone as substrates, lower activity with 3-methyl-2-cyclohexenone and 3,5,5-trimethyl-2-cyclohexenone as substrate, and no activity with canarigenin, canarigenin digitoxoside and pregnenolone. May be involved in the formation of 5-beta phytoecdysteroids. The polypeptide is 3-oxo-Delta(4,5)-steroid 5-beta-reductase (VEP1) (Arabidopsis thaliana (Mouse-ear cress)).